The chain runs to 123 residues: Large ribosomal subunit protein bL12 (123 aa).

The protein belongs to the bacterial ribosomal protein bL12 family. In terms of assembly, homodimer. Part of the ribosomal stalk of the 50S ribosomal subunit. Forms a multimeric L10(L12)X complex, where L10 forms an elongated spine to which 2 to 4 L12 dimers bind in a sequential fashion. Binds GTP-bound translation factors.

Forms part of the ribosomal stalk which helps the ribosome interact with GTP-bound translation factors. Is thus essential for accurate translation. In Bartonella quintana (strain Toulouse) (Rochalimaea quintana), this protein is Large ribosomal subunit protein bL12.